Here is a 325-residue protein sequence, read N- to C-terminus: Ribosomal RNA small subunit methyltransferase H (325 aa).

Residues 33–35 (GGH), Asp-52, Leu-87, Asp-101, and Gln-108 each bind S-adenosyl-L-methionine. The disordered stretch occupies residues 285 to 325 (AEPAGEVEKADNPRAASVRLRAAERTAPNPDRTQPTIGGAS). The span at 315-325 (DRTQPTIGGAS) shows a compositional bias: polar residues.

It belongs to the methyltransferase superfamily. RsmH family.

Its subcellular location is the cytoplasm. It catalyses the reaction cytidine(1402) in 16S rRNA + S-adenosyl-L-methionine = N(4)-methylcytidine(1402) in 16S rRNA + S-adenosyl-L-homocysteine + H(+). Its function is as follows. Specifically methylates the N4 position of cytidine in position 1402 (C1402) of 16S rRNA. The protein is Ribosomal RNA small subunit methyltransferase H of Frankia alni (strain DSM 45986 / CECT 9034 / ACN14a).